A 295-amino-acid polypeptide reads, in one-letter code: 4-hydroxybenzoate octaprenyltransferase (295 aa).

Transmembrane regions (helical) follow at residues 28 to 48 (AGWLLLLWPTLSALWIAAGGF), 51 to 71 (WHLLAVFTLGTILMRSAGCCV), 101 to 121 (ALGVGAVLALVSFGLVLTTNA), 124 to 144 (IAWSLPALAVTIAYPFAKRFV), 159 to 179 (IPMAFTAVGGAVPMLAAWLVL), 220 to 240 (VMAFYLAFVALWAWALAPFGL), 242 to 262 (WPLHAVLAAMLLQVAWHWRLI), and 274 to 294 (FTGNHWLGFTLFAGIVAGFAL).

This sequence belongs to the UbiA prenyltransferase family. The cofactor is Mg(2+).

Its subcellular location is the cell inner membrane. The enzyme catalyses all-trans-octaprenyl diphosphate + 4-hydroxybenzoate = 4-hydroxy-3-(all-trans-octaprenyl)benzoate + diphosphate. The protein operates within cofactor biosynthesis; ubiquinone biosynthesis. In terms of biological role, catalyzes the prenylation of para-hydroxybenzoate (PHB) with an all-trans polyprenyl group. Mediates the second step in the final reaction sequence of ubiquinone-8 (UQ-8) biosynthesis, which is the condensation of the polyisoprenoid side chain with PHB, generating the first membrane-bound Q intermediate 3-octaprenyl-4-hydroxybenzoate. The polypeptide is 4-hydroxybenzoate octaprenyltransferase (Paracidovorax citrulli (strain AAC00-1) (Acidovorax citrulli)).